Here is a 193-residue protein sequence, read N- to C-terminus: General stress protein 16U (193 aa).

This sequence belongs to the CAPAB/TerDEXZ family.

This Bacillus subtilis (strain 168) protein is General stress protein 16U (yceD).